The primary structure comprises 306 residues: ADP-polyphosphate phosphotransferase 2 (306 aa).

This sequence belongs to the polyphosphate kinase 2 (PPK2) family. Class I subfamily.

It catalyses the reaction [phosphate](n) + ATP = [phosphate](n+1) + ADP. It carries out the reaction [phosphate](n) + GTP = [phosphate](n+1) + GDP. Its function is as follows. Uses inorganic polyphosphate (polyP) as a donor to convert ADP to ATP. Can also convert GDP to GTP, with lower efficiency. This chain is ADP-polyphosphate phosphotransferase 2, found in Rhizobium meliloti (strain 1021) (Ensifer meliloti).